The primary structure comprises 189 residues: Peptidyl-tRNA hydrolase (189 aa).

Position 15 (Tyr15) interacts with tRNA. His20 acts as the Proton acceptor in catalysis. TRNA is bound by residues Tyr65, Asn67, and Asn113.

This sequence belongs to the PTH family. Monomer.

It localises to the cytoplasm. The enzyme catalyses an N-acyl-L-alpha-aminoacyl-tRNA + H2O = an N-acyl-L-amino acid + a tRNA + H(+). In terms of biological role, hydrolyzes ribosome-free peptidyl-tRNAs (with 1 or more amino acids incorporated), which drop off the ribosome during protein synthesis, or as a result of ribosome stalling. Catalyzes the release of premature peptidyl moieties from peptidyl-tRNA molecules trapped in stalled 50S ribosomal subunits, and thus maintains levels of free tRNAs and 50S ribosomes. This Caldicellulosiruptor bescii (strain ATCC BAA-1888 / DSM 6725 / KCTC 15123 / Z-1320) (Anaerocellum thermophilum) protein is Peptidyl-tRNA hydrolase.